Consider the following 497-residue polypeptide: Pseudooxynicotine dehydrogenase (497 aa).

The segment at residues 1 to 43 (MANDKGDISKDGVSRRKFLGGAVIGAAAAAGVGSQILSLSATA) is a signal peptide (tat-type signal). FAD is bound by residues Ala-70, Glu-89, Arg-97, Trp-114, Val-286, Ser-462, and Ile-472.

This sequence belongs to the flavin monoamine oxidase family. As to quaternary structure, homodimer. It depends on FAD as a cofactor. In terms of processing, predicted to be exported by the Tat system. The position of the signal peptide cleavage has not been experimentally proven.

The protein localises to the periplasm. The enzyme catalyses pseudooxynicotine + 2 Fe(III)-[cytochrome c] + H2O = 4-oxo-4-(pyridin-3-yl)butanal + methylamine + 2 Fe(II)-[cytochrome c] + 2 H(+). It participates in alkaloid degradation; nicotine degradation. Strongly inhibited by Ag(+), Co(2+), Cu(2+) and Hg(2+). Functionally, involved in nicotine degradation. Catalyzes the deamination of pseudooxynicotine to 3-succinoylsemialdehyde-pyridine. The chain is Pseudooxynicotine dehydrogenase from Pseudomonas sp.